The primary structure comprises 54 residues: uncharacterized protein (54 aa).

It to B.subtilis XkdX.

This is an uncharacterized protein from Bacillus subtilis (strain 168).